We begin with the raw amino-acid sequence, 228 residues long: MAKSKAYRAAAEKIDPAKAYTASEAVELARETGSSKFDSTVEVALKLGVDPRKADQMVRGTVILPHGTGKTARVIVFATGPAAEAAIAAGADEVGGDELIEKVAGGYTSFDSAVSTPELMGKVGRLGKVLGPRGLMPNPKTGTVTPDVARAVSDIKGGKIEFRVDKHANVHFVVGKASFSPEQLSENVGAALEEIVRLKPSSSKGRYVQKATVSTTFGPGIPVDVNSI.

It belongs to the universal ribosomal protein uL1 family. Part of the 50S ribosomal subunit.

Functionally, binds directly to 23S rRNA. The L1 stalk is quite mobile in the ribosome, and is involved in E site tRNA release. Protein L1 is also a translational repressor protein, it controls the translation of the L11 operon by binding to its mRNA. This Clavibacter michiganensis subsp. michiganensis (strain NCPPB 382) protein is Large ribosomal subunit protein uL1.